A 240-amino-acid polypeptide reads, in one-letter code: UPF0173 metal-dependent hydrolase OE_2513F (240 aa).

Belongs to the UPF0173 family.

The chain is UPF0173 metal-dependent hydrolase OE_2513F from Halobacterium salinarum (strain ATCC 29341 / DSM 671 / R1).